A 250-amino-acid chain; its full sequence is Leucyl/phenylalanyl-tRNA--protein transferase (250 aa).

This sequence belongs to the L/F-transferase family.

The protein localises to the cytoplasm. It carries out the reaction N-terminal L-lysyl-[protein] + L-leucyl-tRNA(Leu) = N-terminal L-leucyl-L-lysyl-[protein] + tRNA(Leu) + H(+). It catalyses the reaction N-terminal L-arginyl-[protein] + L-leucyl-tRNA(Leu) = N-terminal L-leucyl-L-arginyl-[protein] + tRNA(Leu) + H(+). The catalysed reaction is L-phenylalanyl-tRNA(Phe) + an N-terminal L-alpha-aminoacyl-[protein] = an N-terminal L-phenylalanyl-L-alpha-aminoacyl-[protein] + tRNA(Phe). Functionally, functions in the N-end rule pathway of protein degradation where it conjugates Leu, Phe and, less efficiently, Met from aminoacyl-tRNAs to the N-termini of proteins containing an N-terminal arginine or lysine. The chain is Leucyl/phenylalanyl-tRNA--protein transferase from Bordetella avium (strain 197N).